The chain runs to 1086 residues: WD repeat-containing protein 64 (1086 aa).

9 WD repeats span residues 129 to 168 (RRRD…WITG), 170 to 199 (DYLG…SSQE), 321 to 360 (AMPR…KPVG), 364 to 403 (GHMF…VLQV), 411 to 448 (PGDM…QDTK), 453 to 492 (THER…QIYQ), 498 to 537 (GLSI…EMKM), 560 to 602 (QVKQ…PYLQ), and 642 to 683 (IVDV…VKEI). Positions 724–749 (ICSSTQCDSSKGPQSSKGSKQSIHDA) are disordered. Residues 732–744 (SSKGPQSSKGSKQ) are compositionally biased toward low complexity. 3 WD repeats span residues 765-806 (ASRK…KDML), 809-850 (TKHS…DPPH), and 863-902 (AHSL…YCGY). A disordered region spans residues 1047–1069 (DKVKREEAPEMTEGSRRKSLKRN). The segment covering 1049-1062 (VKREEAPEMTEGSR) has biased composition (basic and acidic residues).

The polypeptide is WD repeat-containing protein 64 (Wdr64) (Mus musculus (Mouse)).